The chain runs to 107 residues: Ig kappa chain V-VI region TEPC 601/TEPC 191 (107 aa).

A framework-1 region spans residues 1–23 (EIVLTQSPAITAASLGQKVTITC). A disulfide bond links C23 and C87. The tract at residues 24–33 (SASSSVSYMH) is complementarity-determining-1. Residues 34-48 (WYQQKSGTSPKPWIY) form a framework-2 region. Positions 49-55 (EISKLAS) are complementarity-determining-2. A framework-3 region spans residues 56-87 (GVPARFSGSGSGTSYSLTISSMEAEDAAIYYC). The segment at 88–96 (QQWNYPLIT) is complementarity-determining-3. The segment at 97-106 (FGAGTKLELK) is framework-4.

The chain is Ig kappa chain V-VI region TEPC 601/TEPC 191 from Mus musculus (Mouse).